The primary structure comprises 470 residues: Cysteine--tRNA ligase (470 aa).

Cys-28 lines the Zn(2+) pocket. The 'HIGH' region signature appears at 30–40 (PTVYNYIHIGN). The Zn(2+) site is built by Cys-212, His-237, and Glu-241. The 'KMSKS' region motif lies at 271–275 (KMSKS). Residue Lys-274 participates in ATP binding.

Belongs to the class-I aminoacyl-tRNA synthetase family. Monomer. Zn(2+) serves as cofactor.

Its subcellular location is the cytoplasm. The catalysed reaction is tRNA(Cys) + L-cysteine + ATP = L-cysteinyl-tRNA(Cys) + AMP + diphosphate. The chain is Cysteine--tRNA ligase from Ligilactobacillus salivarius (strain UCC118) (Lactobacillus salivarius).